A 426-amino-acid chain; its full sequence is Serine hydroxymethyltransferase (426 aa).

(6S)-5,6,7,8-tetrahydrofolate-binding positions include leucine 118 and 122-124 (GHL). The residue at position 227 (lysine 227) is an N6-(pyridoxal phosphate)lysine.

It belongs to the SHMT family. In terms of assembly, homodimer. The cofactor is pyridoxal 5'-phosphate.

It localises to the cytoplasm. The catalysed reaction is (6R)-5,10-methylene-5,6,7,8-tetrahydrofolate + glycine + H2O = (6S)-5,6,7,8-tetrahydrofolate + L-serine. The protein operates within one-carbon metabolism; tetrahydrofolate interconversion. Its pathway is amino-acid biosynthesis; glycine biosynthesis; glycine from L-serine: step 1/1. Catalyzes the reversible interconversion of serine and glycine with tetrahydrofolate (THF) serving as the one-carbon carrier. This reaction serves as the major source of one-carbon groups required for the biosynthesis of purines, thymidylate, methionine, and other important biomolecules. Also exhibits THF-independent aldolase activity toward beta-hydroxyamino acids, producing glycine and aldehydes, via a retro-aldol mechanism. The chain is Serine hydroxymethyltransferase from Mycobacterium avium (strain 104).